The sequence spans 399 residues: Succinate--CoA ligase [ADP-forming] subunit beta (399 aa).

Positions 9–254 (KQVLAKYGVP…EDEEDPMELE (246 aa)) constitute an ATP-grasp domain. ATP is bound by residues lysine 46, 53–55 (GRG), glutamate 109, cysteine 112, and glutamate 117. Residues asparagine 209 and aspartate 223 each coordinate Mg(2+). Substrate-binding positions include asparagine 274 and 331-333 (GIM).

Belongs to the succinate/malate CoA ligase beta subunit family. Heterotetramer of two alpha and two beta subunits. It depends on Mg(2+) as a cofactor.

The enzyme catalyses succinate + ATP + CoA = succinyl-CoA + ADP + phosphate. The catalysed reaction is GTP + succinate + CoA = succinyl-CoA + GDP + phosphate. It functions in the pathway carbohydrate metabolism; tricarboxylic acid cycle; succinate from succinyl-CoA (ligase route): step 1/1. Functionally, succinyl-CoA synthetase functions in the citric acid cycle (TCA), coupling the hydrolysis of succinyl-CoA to the synthesis of either ATP or GTP and thus represents the only step of substrate-level phosphorylation in the TCA. The beta subunit provides nucleotide specificity of the enzyme and binds the substrate succinate, while the binding sites for coenzyme A and phosphate are found in the alpha subunit. This Rhodospirillum rubrum (strain ATCC 11170 / ATH 1.1.1 / DSM 467 / LMG 4362 / NCIMB 8255 / S1) protein is Succinate--CoA ligase [ADP-forming] subunit beta.